A 281-amino-acid chain; its full sequence is ATP synthase gamma chain (281 aa).

The protein belongs to the ATPase gamma chain family. F-type ATPases have 2 components, CF(1) - the catalytic core - and CF(0) - the membrane proton channel. CF(1) has five subunits: alpha(3), beta(3), gamma(1), delta(1), epsilon(1). CF(0) has three main subunits: a, b and c.

The protein localises to the cell inner membrane. Functionally, produces ATP from ADP in the presence of a proton gradient across the membrane. The gamma chain is believed to be important in regulating ATPase activity and the flow of protons through the CF(0) complex. This Ehrlichia canis (strain Jake) protein is ATP synthase gamma chain.